We begin with the raw amino-acid sequence, 2123 residues long: Toxin Afp18 (2123 aa).

The disordered stretch occupies residues 864–919 (FFDNSDQDADQPRVRRKREMTDEIMLSDGSSRSEAKALPDENELDTDQSKSRPESA). The interval 1771 to 2123 (VFDSANTNRS…GNSTQSSGLS (353 aa)) is tyrosine glycosyltransferase. UDP-N-acetyl-alpha-D-glucosamine contacts are provided by residues 1850-1852 (IWV) and 1940-1941 (SD). The a divalent metal cation site is built by Asp-1957 and Asp-1959. The DxDD motif motif lies at 1957–1960 (DIDD). UDP-N-acetyl-alpha-D-glucosamine is bound at residue Asn-1993.

A divalent metal cation serves as cofactor.

Its subcellular location is the secreted. The protein localises to the host cell membrane. The enzyme catalyses L-tyrosyl-[protein] + UDP-N-acetyl-alpha-D-glucosamine = O-(N-acetyl-alpha-D-glucosaminyl)-L-tyrosyl-[protein] + UDP + H(+). Functionally, toxin component of the prophage tail-derived protein translocation system Afp, which is the causative agent of enteric redmouth disease in salmonid fish species. Mono-O-GlcNAcylates the small GTPase RhoA in eukaryotic host cells at Tyr-34, using UDP-N-acetylglucosamine (UDP-GlcNAc) as the sugar donor. Glycosylation of RhoA results in impaired effector and regulator interaction and inactivation of downstream RhoA signaling which leads to actin filament depolymerization and blocks cytokinesis and gastrulation during zebrafish embryo development. To a lesser extent, is also able to glycosylate other Rho family GTPases (RhoB, RhoC, Rac1, Rac2, Rac3, and Cdc42) in vitro at a switch I tyrosine residue, but not Ras proteins. The polypeptide is Toxin Afp18 (Yersinia ruckeri serotype O1 (strain ATCC 29473 / DSM 18506 / JCM 15110 / CCUG 14190 / NCIMB 2194 / NCTC 12986 / 2396-61)).